The following is a 176-amino-acid chain: Peptide methionine sulfoxide reductase MsrA (176 aa).

Cys12 is a catalytic residue.

It belongs to the MsrA Met sulfoxide reductase family.

The catalysed reaction is L-methionyl-[protein] + [thioredoxin]-disulfide + H2O = L-methionyl-(S)-S-oxide-[protein] + [thioredoxin]-dithiol. The enzyme catalyses [thioredoxin]-disulfide + L-methionine + H2O = L-methionine (S)-S-oxide + [thioredoxin]-dithiol. Has an important function as a repair enzyme for proteins that have been inactivated by oxidation. Catalyzes the reversible oxidation-reduction of methionine sulfoxide in proteins to methionine. In Thermus thermophilus (strain ATCC BAA-163 / DSM 7039 / HB27), this protein is Peptide methionine sulfoxide reductase MsrA.